Reading from the N-terminus, the 404-residue chain is Cysteine desulfurase IscS (404 aa).

Residues 73 to 74 (AT), Asn153, Gln181, and 201 to 203 (SAH) contribute to the pyridoxal 5'-phosphate site. Position 204 is an N6-(pyridoxal phosphate)lysine (Lys204). Thr241 provides a ligand contact to pyridoxal 5'-phosphate. Catalysis depends on Cys327, which acts as the Cysteine persulfide intermediate. Cys327 provides a ligand contact to [2Fe-2S] cluster.

It belongs to the class-V pyridoxal-phosphate-dependent aminotransferase family. NifS/IscS subfamily. Homodimer. Forms a heterotetramer with IscU, interacts with other sulfur acceptors. Pyridoxal 5'-phosphate is required as a cofactor.

Its subcellular location is the cytoplasm. The enzyme catalyses (sulfur carrier)-H + L-cysteine = (sulfur carrier)-SH + L-alanine. It functions in the pathway cofactor biosynthesis; iron-sulfur cluster biosynthesis. Its function is as follows. Master enzyme that delivers sulfur to a number of partners involved in Fe-S cluster assembly, tRNA modification or cofactor biosynthesis. Catalyzes the removal of elemental sulfur atoms from cysteine to produce alanine. Functions as a sulfur delivery protein for Fe-S cluster synthesis onto IscU, an Fe-S scaffold assembly protein, as well as other S acceptor proteins. The sequence is that of Cysteine desulfurase IscS from Anaeromyxobacter sp. (strain K).